Here is a 430-residue protein sequence, read N- to C-terminus: Maintenance of mitochondrial morphology protein 1 (430 aa).

Over 1-70 (MSQGLIETTT…NGNTWSFTQG (70 aa)) the chain is Lumenal. Residues 71–91 (LVIGQISVIFIIIVFVKFFVF) form a helical membrane-spanning segment. Residues 92-430 (ADSSSHIPTK…TPGEFVNSNI (339 aa)) are Cytoplasmic-facing. In terms of domain architecture, SMP-LTD spans 159-387 (ASESLDWFNV…EPRFQVVRLP (229 aa)). A disordered region spans residues 305-326 (GYSKENGSADSASDNDEDEDDG). Residues 317 to 326 (SDNDEDEDDG) show a composition bias toward acidic residues.

Belongs to the MMM1 family. Homodimer. Component of the ER-mitochondria encounter structure (ERMES) or MDM complex, composed of MMM1, MDM10, MDM12 and MDM34. An MMM1 homodimer associates with one molecule of MDM12 on each side in a pairwise head-to-tail manner, and the SMP-LTD domains of MMM1 and MDM12 generate a continuous hydrophobic tunnel for phospholipid trafficking.

Its subcellular location is the endoplasmic reticulum membrane. Functionally, component of the ERMES/MDM complex, which serves as a molecular tether to connect the endoplasmic reticulum (ER) and mitochondria. Components of this complex are involved in the control of mitochondrial shape and protein biogenesis, and function in nonvesicular lipid trafficking between the ER and mitochondria. The MDM12-MMM1 subcomplex functions in the major beta-barrel assembly pathway that is responsible for biogenesis of all outer membrane beta-barrel proteins, and acts in a late step after the SAM complex. The MDM10-MDM12-MMM1 subcomplex further acts in the TOM40-specific pathway after the action of the MDM12-MMM1 complex. Essential for establishing and maintaining the structure of mitochondria and maintenance of mtDNA nucleoids. The sequence is that of Maintenance of mitochondrial morphology protein 1 from Candida dubliniensis (strain CD36 / ATCC MYA-646 / CBS 7987 / NCPF 3949 / NRRL Y-17841) (Yeast).